A 151-amino-acid polypeptide reads, in one-letter code: MNEPVLFLLLLLALGFLAKNKSLIVAIVVLLAIKLVGLDQKVLPIIQSKGINWGVTVITIAVLAPIASGEIGFRQLVGSLQSLSAWVALASGIFVALIAKNGVTLLANDPHMTAALAFGTILAVSLFHGVAVGPLIGAGIAYTVIKMVEYF.

4 helical membrane-spanning segments follow: residues 5 to 25, 53 to 73, 79 to 99, and 121 to 141; these read VLFL…SLIV, WGVT…EIGF, SLQS…ALIA, and ILAV…AGIA.

This sequence belongs to the UPF0756 family.

Its subcellular location is the cell membrane. The protein is UPF0756 membrane protein GK2737 of Geobacillus kaustophilus (strain HTA426).